Consider the following 154-residue polypeptide: Sperm microtubule associated protein 1 (154 aa).

The chain is Sperm microtubule associated protein 1 from Homo sapiens (Human).